The sequence spans 72 residues: Potassium channel toxin epsilon-KTx 1.1 (72 aa).

A signal peptide spans 1–30 (MKLSCGFLLILLVLSAMIATFSEVEAMKPS). 4 cysteine pairs are disulfide-bonded: C34–C42, C37–C58, C41–C51, and C46–C56. Positions 60 to 72 (GRSDLNDELEKYQ) are excised as a propeptide.

The protein belongs to the short scorpion toxin superfamily. Potassium channel inhibitor family. Epsilon-KTx 01 subfamily. As to expression, expressed by the venom gland.

Its subcellular location is the secreted. Potassium channel blocker. At 3 uM, this toxin blocks voltage-independently voltage-gated potassium channels rKv1.2/KCNA2 (25%), hKv1.3/KCNA3 (27%), rKv4.2/KCND2 (25%), Kv10.1/KCNH1/EAG1 (15%), Kv11/hERG (12%), and Shaker-IR (10%). On hKv1.3/KCNA3, the IC(50) is 17.1 +-3.3 uM. The protein is Potassium channel toxin epsilon-KTx 1.1 of Tityus serrulatus (Brazilian scorpion).